The primary structure comprises 456 residues: Exodeoxyribonuclease 7 large subunit (456 aa).

This sequence belongs to the XseA family. In terms of assembly, heterooligomer composed of large and small subunits.

The protein localises to the cytoplasm. The catalysed reaction is Exonucleolytic cleavage in either 5'- to 3'- or 3'- to 5'-direction to yield nucleoside 5'-phosphates.. Functionally, bidirectionally degrades single-stranded DNA into large acid-insoluble oligonucleotides, which are then degraded further into small acid-soluble oligonucleotides. In Escherichia coli (strain ATCC 8739 / DSM 1576 / NBRC 3972 / NCIMB 8545 / WDCM 00012 / Crooks), this protein is Exodeoxyribonuclease 7 large subunit.